The chain runs to 42 residues: Delta-actinopoditoxin-Mb1a (42 aa).

4 cysteine pairs are disulfide-bonded: C1/C15, C8/C20, C14/C31, and C16/C42.

Belongs to the neurotoxin 06 (delta-actx) family. In terms of tissue distribution, expressed by the venom gland.

The protein resides in the secreted. Neurotoxin that slows the inactivation of vertebrate tetrodotoxin-sensitive voltage-gated sodium channels (Nav) and most likely insect sodium channels presumably by binding to site 3 of the channel. Effects are an increase in resting tension, a muscle fasciculation and a decrease in indirect twitch tension. It fails to affect tetrodotoxin-resistant sodium currents. In vivo, is lethal to both vertebrates and insects. This chain is Delta-actinopoditoxin-Mb1a, found in Missulena bradleyi (Eastern mouse spider).